The sequence spans 490 residues: POC1 centriolar protein homolog B (490 aa).

WD repeat units lie at residues 16-55 (GHKD…RAFR), 58-97 (GHTD…ESTV), 100-139 (AHTA…FLYS), 142-181 (RHTN…CINI), 184-223 (DYGG…LIQH), 226-265 (VHNA…LIYT), and 268-307 (GHKG…LNYR). The span at 375–388 (DGASSSRAQFTSGM) shows a compositional bias: polar residues. Residues 375-427 (DGASSSRAQFTSGMDSGPFRTHTQAREEEDENQEERFAGGMTASPAERSGIPS) form a disordered region. Residues 431–463 (STLENIVQQLDILTQTVAVLEERLTLTEDKLRT) adopt a coiled-coil conformation.

The protein belongs to the WD repeat POC1 family.

It is found in the cytoplasm. The protein localises to the cytoskeleton. The protein resides in the microtubule organizing center. Its subcellular location is the centrosome. It localises to the centriole. Its function is as follows. Plays an important role in centriole assembly and/or stability and ciliogenesis. Involved in early steps of centriole duplication, as well as in the later steps of centriole length control. The protein is POC1 centriolar protein homolog B of Danio rerio (Zebrafish).